A 336-amino-acid polypeptide reads, in one-letter code: F420-dependent glucose-6-phosphate dehydrogenase (336 aa).

Asp39 contributes to the coenzyme F420-(gamma-Glu)n binding site. Catalysis depends on His40, which acts as the Proton donor. Residues Thr76 and 107-108 (SG) contribute to the coenzyme F420-(gamma-Glu)n site. The active-site Proton acceptor is the Glu109. Coenzyme F420-(gamma-Glu)n-binding positions include Asn112, 177-178 (GG), and 180-181 (VV). Substrate is bound by residues Thr195, Lys198, Lys259, and Arg283.

The protein belongs to the F420-dependent glucose-6-phosphate dehydrogenase family. In terms of assembly, homodimer.

The catalysed reaction is oxidized coenzyme F420-(gamma-L-Glu)(n) + D-glucose 6-phosphate + H(+) = 6-phospho-D-glucono-1,5-lactone + reduced coenzyme F420-(gamma-L-Glu)(n). Catalyzes the coenzyme F420-dependent oxidation of glucose 6-phosphate (G6P) to 6-phosphogluconolactone. The chain is F420-dependent glucose-6-phosphate dehydrogenase from Tsukamurella paurometabola (strain ATCC 8368 / DSM 20162 / CCUG 35730 / CIP 100753 / JCM 10117 / KCTC 9821 / NBRC 16120 / NCIMB 702349 / NCTC 13040) (Corynebacterium paurometabolum).